The following is a 267-amino-acid chain: Glutamate racemase (267 aa).

Substrate is bound by residues 10-11 (DS) and 42-43 (YG). Cysteine 73 functions as the Proton donor/acceptor in the catalytic mechanism. Residue 74–75 (NT) coordinates substrate. Catalysis depends on cysteine 183, which acts as the Proton donor/acceptor. 184–185 (TH) contacts substrate.

This sequence belongs to the aspartate/glutamate racemases family.

The catalysed reaction is L-glutamate = D-glutamate. It participates in cell wall biogenesis; peptidoglycan biosynthesis. Functionally, provides the (R)-glutamate required for cell wall biosynthesis. In Lactobacillus helveticus (strain DPC 4571), this protein is Glutamate racemase.